We begin with the raw amino-acid sequence, 356 residues long: Histidinol-phosphate aminotransferase (356 aa).

Lys-213 is subject to N6-(pyridoxal phosphate)lysine.

This sequence belongs to the class-II pyridoxal-phosphate-dependent aminotransferase family. Histidinol-phosphate aminotransferase subfamily. In terms of assembly, homodimer. Pyridoxal 5'-phosphate is required as a cofactor.

The catalysed reaction is L-histidinol phosphate + 2-oxoglutarate = 3-(imidazol-4-yl)-2-oxopropyl phosphate + L-glutamate. The protein operates within amino-acid biosynthesis; L-histidine biosynthesis; L-histidine from 5-phospho-alpha-D-ribose 1-diphosphate: step 7/9. The protein is Histidinol-phosphate aminotransferase of Clostridium novyi (strain NT).